A 219-amino-acid polypeptide reads, in one-letter code: Lipid transferase CIDEB (219 aa).

Residues 33–110 (PRQRPFRVCD…VLELGQSWSP (78 aa)) form the CIDE-N domain.

This sequence belongs to the CIDE family. In terms of assembly, interacts with DFFA. Interacts with DFFB; inhibited by DFFB. Interacts with APOB. Interacts with PREB/SEC12; facilitating loading of SCAP-SREBP into COPII vesicles.

Its subcellular location is the lipid droplet. It localises to the endoplasmic reticulum membrane. The protein resides in the golgi apparatus. The protein localises to the cytoplasmic vesicle. It is found in the COPI-coated vesicle. Lipid transferase specifically expressed in hepatocytes, which promotes unilocular lipid droplet formation by mediating lipid droplet fusion. Lipid droplet fusion promotes their enlargement, restricting lipolysis and favoring lipid storage. Localizes on the lipid droplet surface, at focal contact sites between lipid droplets, and mediates atypical lipid droplet fusion by promoting directional net neutral lipid transfer from the smaller to larger lipid droplets. The transfer direction may be driven by the internal pressure difference between the contacting lipid droplet pair. Promotes lipid exchange and lipid droplet fusion in both small and large lipid droplet-containing hepatocytes. In addition to its role in lipid droplet fusion, also involved in cytoplasmic vesicle biogenesis and transport. Required for very-low-density lipoprotein (VLDL) lipidation and maturation. Probably involved in the biogenesis of VLDL transport vesicles by forming a COPII vesicle coat and facilitating the formation of endoplasmic reticulum-derived large vesicles. Also involved in sterol-regulated export of the SCAP-SREBP complex, composed of SCAP, SREBF1/SREBP1 and SREBF2/SREBP2, by promoting loading of SCAP-SREBP into COPII vesicles. May also activate apoptosis. The chain is Lipid transferase CIDEB (CIDEB) from Bos taurus (Bovine).